Consider the following 178-residue polypeptide: Oligoribonuclease (178 aa).

The 162-residue stretch at 7–168 (LIWIDLEMTG…DDIRESIAEL (162 aa)) folds into the Exonuclease domain. Tyrosine 128 is a catalytic residue.

It belongs to the oligoribonuclease family.

It is found in the cytoplasm. Its function is as follows. 3'-to-5' exoribonuclease specific for small oligoribonucleotides. The protein is Oligoribonuclease of Francisella tularensis subsp. holarctica (strain OSU18).